A 340-amino-acid polypeptide reads, in one-letter code: S-adenosylmethionine:tRNA ribosyltransferase-isomerase (340 aa).

The protein belongs to the QueA family. As to quaternary structure, monomer.

It is found in the cytoplasm. It carries out the reaction 7-aminomethyl-7-carbaguanosine(34) in tRNA + S-adenosyl-L-methionine = epoxyqueuosine(34) in tRNA + adenine + L-methionine + 2 H(+). The protein operates within tRNA modification; tRNA-queuosine biosynthesis. Transfers and isomerizes the ribose moiety from AdoMet to the 7-aminomethyl group of 7-deazaguanine (preQ1-tRNA) to give epoxyqueuosine (oQ-tRNA). This is S-adenosylmethionine:tRNA ribosyltransferase-isomerase from Nitratiruptor sp. (strain SB155-2).